Here is a 511-residue protein sequence, read N- to C-terminus: ATP synthase subunit alpha (511 aa).

169–176 (GDRQTGKT) serves as a coordination point for ATP.

This sequence belongs to the ATPase alpha/beta chains family. As to quaternary structure, F-type ATPases have 2 components, CF(1) - the catalytic core - and CF(0) - the membrane proton channel. CF(1) has five subunits: alpha(3), beta(3), gamma(1), delta(1), epsilon(1). CF(0) has three main subunits: a(1), b(2) and c(9-12). The alpha and beta chains form an alternating ring which encloses part of the gamma chain. CF(1) is attached to CF(0) by a central stalk formed by the gamma and epsilon chains, while a peripheral stalk is formed by the delta and b chains.

It is found in the cell inner membrane. The catalysed reaction is ATP + H2O + 4 H(+)(in) = ADP + phosphate + 5 H(+)(out). In terms of biological role, produces ATP from ADP in the presence of a proton gradient across the membrane. The alpha chain is a regulatory subunit. The protein is ATP synthase subunit alpha of Bartonella tribocorum (strain CIP 105476 / IBS 506).